Consider the following 383-residue polypeptide: S-adenosylmethionine synthase (383 aa).

Histidine 15 is a binding site for ATP. Aspartate 17 lines the Mg(2+) pocket. Residue glutamate 43 participates in K(+) binding. 2 residues coordinate L-methionine: glutamate 56 and glutamine 99. The tract at residues 99 to 109 (QSPDINQGVDR) is flexible loop. ATP contacts are provided by residues 164–166 (DAK), 230–231 (RF), aspartate 239, 245–246 (RK), alanine 262, and lysine 266. Residue aspartate 239 coordinates L-methionine. Lysine 270 lines the L-methionine pocket.

Belongs to the AdoMet synthase family. As to quaternary structure, homotetramer; dimer of dimers. Mg(2+) is required as a cofactor. Requires K(+) as cofactor.

It is found in the cytoplasm. The enzyme catalyses L-methionine + ATP + H2O = S-adenosyl-L-methionine + phosphate + diphosphate. It functions in the pathway amino-acid biosynthesis; S-adenosyl-L-methionine biosynthesis; S-adenosyl-L-methionine from L-methionine: step 1/1. In terms of biological role, catalyzes the formation of S-adenosylmethionine (AdoMet) from methionine and ATP. The overall synthetic reaction is composed of two sequential steps, AdoMet formation and the subsequent tripolyphosphate hydrolysis which occurs prior to release of AdoMet from the enzyme. In Shewanella denitrificans (strain OS217 / ATCC BAA-1090 / DSM 15013), this protein is S-adenosylmethionine synthase.